Reading from the N-terminus, the 315-residue chain is Prephenate dehydratase (315 aa).

The region spanning 3–190 is the Prephenate dehydratase domain; that stretch reads RIAYLGPQGT…ARTRFVLVGR (188 aa). Residues 204-281 enclose the ACT domain; that stretch reads SVALRLPNTP…EDVRYLGSWP (78 aa).

In terms of assembly, homodimer.

It catalyses the reaction prephenate + H(+) = 3-phenylpyruvate + CO2 + H2O. Its pathway is amino-acid biosynthesis; L-phenylalanine biosynthesis; phenylpyruvate from prephenate: step 1/1. The protein is Prephenate dehydratase (pheA) of Mycobacterium sp. (strain KMS).